The sequence spans 70 residues: Protein SlyX homolog (70 aa).

The protein belongs to the SlyX family.

The sequence is that of Protein SlyX homolog from Pseudoalteromonas atlantica (strain T6c / ATCC BAA-1087).